Reading from the N-terminus, the 341-residue chain is Hypophosphite import ATP-binding protein HtxD (341 aa).

An ABC transporter domain is found at 6 to 249 (LQLKNVGKSY…RVHALYQVPA (244 aa)). 38 to 45 (GTSGAGKS) is an ATP binding site. Residues 278 to 341 (IHTPHTRAAP…TGRGQDRGPG (64 aa)) are disordered. Composition is skewed to basic and acidic residues over residues 307–320 (ADRR…DRTT) and 327–341 (GGHD…RGPG).

It belongs to the ABC transporter superfamily. Phosphonates importer (TC 3.A.1.9.1) family. The complex is composed of two ATP-binding proteins (HtxD), two transmembrane proteins (HtxC and HtxE) and a solute-binding protein (HtxB).

The protein resides in the cell inner membrane. It carries out the reaction phosphinate(out) + ATP + H2O = phosphinate(in) + ADP + phosphate + H(+). Its function is as follows. Part of the ABC transporter complex HtxBCDE involved in hypophosphite import. Responsible for energy coupling to the transport system. This is Hypophosphite import ATP-binding protein HtxD (htxD) from Stutzerimonas stutzeri (Pseudomonas stutzeri).